The chain runs to 173 residues: Alpha-crystallin A chain (173 aa).

At M1 the chain carries N-acetylmethionine. The tract at residues 1–63 (MDVTIQHPWF…RTVLDSGISE (63 aa)) is required for complex formation with BFSP1 and BFSP2. Deamidated glutamine; partial is present on Q6. Phosphoserine is present on S45. Q50 is modified (deamidated glutamine; partial). One can recognise a sHSP domain in the interval 52-162 (LFRTVLDSGI…GHSERAIPVS (111 aa)). At K70 the chain carries N6-acetyllysine. Residue Q90 is modified to Deamidated glutamine; partial. Position 99 is an N6-acetyllysine (K99). Residue H100 participates in Zn(2+) binding. The residue at position 101 (N101) is a Deamidated asparagine; partial. The Zn(2+) site is built by E102 and H107. The residue at position 122 (S122) is a Phosphoserine. Position 123 is a deamidated asparagine; partial (N123). Positions 145 to 173 (KVQSGLDAGHSERAIPVSREEKPSSAPSS) are disordered. Q147 is modified (deamidated glutamine; partial). A compositionally biased stretch (basic and acidic residues) spans 153–167 (GHSERAIPVSREEKP). H154 serves as a coordination point for Zn(2+). O-linked (GlcNAc) serine glycosylation is present at S162.

It belongs to the small heat shock protein (HSP20) family. As to quaternary structure, heteromer composed of three CRYAA and one CRYAB subunits. Inter-subunit bridging via zinc ions enhances stability, which is crucial as there is no protein turn over in the lens. Can also form homodimers and homotetramers (dimers of dimers) which serve as the building blocks of homooligomers. Within homooligomers, the zinc-binding motif is created from residues of 3 different molecules. His-100 and Glu-102 from one molecule are ligands of the zinc ion, and His-107 and His-154 residues from additional molecules complete the site with tetrahedral coordination geometry. Part of a complex required for lens intermediate filament formation composed of BFSP1, BFSP2 and CRYAA. In terms of processing, acetylation at Lys-70 may increase chaperone activity. Undergoes age-dependent proteolytical cleavage at the C-terminus.

Its subcellular location is the cytoplasm. It is found in the nucleus. Contributes to the transparency and refractive index of the lens. Acts as a chaperone, preventing aggregation of various proteins under a wide range of stress conditions. Required for the correct formation of lens intermediate filaments as part of a complex composed of BFSP1, BFSP2 and CRYAA. This is Alpha-crystallin A chain (CRYAA) from Cavia porcellus (Guinea pig).